The chain runs to 152 residues: Transcriptional regulator MraZ (152 aa).

SpoVT-AbrB domains are found at residues A5–E52 and A81–T124.

This sequence belongs to the MraZ family. Forms oligomers.

It is found in the cytoplasm. Its subcellular location is the nucleoid. In terms of biological role, negatively regulates its own expression and that of the subsequent genes in the proximal part of the division and cell wall (dcw) gene cluster. Acts by binding directly to DNA. May also regulate the expression of genes outside the dcw cluster. The protein is Transcriptional regulator MraZ of Klebsiella pneumoniae subsp. pneumoniae (strain ATCC 700721 / MGH 78578).